Reading from the N-terminus, the 83-residue chain is MTDKAVYFDGQELPWYIAEDGIGFQPSNNGLHTLTVEFLVETATFKSQWEINHDGEWAWLKRTVDLEMRVQTRAFDRIMKEYS.

The sequence is that of Gene 41 protein (41) from Mycobacterium phage L5 (Mycobacteriophage L5).